We begin with the raw amino-acid sequence, 245 residues long: U11/U12 small nuclear ribonucleoprotein 35 kDa protein (245 aa).

Residues 51–129 (LTLFVARLNL…HEIFVDYELE (79 aa)) form the RRM domain. The segment covering 146–162 (GKKESGQLRFGGRDRPF) has biased composition (basic and acidic residues). Positions 146–165 (GKKESGQLRFGGRDRPFRKP) are disordered. Residue lysine 172 forms a Glycyl lysine isopeptide (Lys-Gly) (interchain with G-Cter in SUMO2) linkage. The disordered stretch occupies residues 173–222 (NDQFREGKRERRERSRSRERHWDSRMRDHHDRGREKRWQEREPARAWPEG). 2 stretches are compositionally biased toward basic and acidic residues: residues 174 to 185 (DQFREGKRERRE) and 192 to 216 (RHWD…REPA).

As to quaternary structure, component of the U11/U12 snRNPs that are part of the U12-type spliceosome.

It localises to the nucleus. This chain is U11/U12 small nuclear ribonucleoprotein 35 kDa protein (SNRNP35), found in Bos taurus (Bovine).